Here is a 325-residue protein sequence, read N- to C-terminus: Phospho-N-acetylmuramoyl-pentapeptide-transferase (325 aa).

9 helical membrane-spanning segments follow: residues Leu7 to Phe27, Ile57 to Phe77, Leu81 to Leu101, Val122 to Ile142, Thr146 to Ala166, Ile186 to Phe206, Val227 to Leu247, Leu252 to Val272, and Val302 to Val322.

The protein belongs to the glycosyltransferase 4 family. MraY subfamily. The cofactor is Mg(2+).

It is found in the cell membrane. The catalysed reaction is UDP-N-acetyl-alpha-D-muramoyl-L-alanyl-gamma-D-glutamyl-meso-2,6-diaminopimeloyl-D-alanyl-D-alanine + di-trans,octa-cis-undecaprenyl phosphate = di-trans,octa-cis-undecaprenyl diphospho-N-acetyl-alpha-D-muramoyl-L-alanyl-D-glutamyl-meso-2,6-diaminopimeloyl-D-alanyl-D-alanine + UMP. Its pathway is cell wall biogenesis; peptidoglycan biosynthesis. Functionally, catalyzes the initial step of the lipid cycle reactions in the biosynthesis of the cell wall peptidoglycan: transfers peptidoglycan precursor phospho-MurNAc-pentapeptide from UDP-MurNAc-pentapeptide onto the lipid carrier undecaprenyl phosphate, yielding undecaprenyl-pyrophosphoryl-MurNAc-pentapeptide, known as lipid I. In Shouchella clausii (strain KSM-K16) (Alkalihalobacillus clausii), this protein is Phospho-N-acetylmuramoyl-pentapeptide-transferase.